The chain runs to 963 residues: Seizure 6-like protein (963 aa).

An N-terminal signal peptide occupies residues 1–31; the sequence is MPVARPQAAGPDRISLFLVAFLLGSPAAAQA. Disordered stretches follow at residues 28-63, 116-150, and 164-204; these read AAQAEDGGPEGEMHPSTAYLLPSASLESSLEEGVTS, RPLATPTTLQRLGSPASATTKLREPEDPEQPTAPA, and LPHS…TTTS. The Extracellular portion of the chain corresponds to 32 to 897; sequence EDGGPEGEMH…ESSLEGGNMA (866 aa). Positions 47–59 are enriched in low complexity; the sequence is LLPSASLESSLEE. Residues 120-135 show a composition bias toward polar residues; the sequence is TPTTLQRLGSPASATT. The span at 191–204 shows a compositional bias: low complexity; it reads TGSASEESQETTTS. Cys-221 and Cys-248 are oxidised to a cystine. The region spanning 221–329 is the CUB 1 domain; the sequence is CGVSFSDPEG…GTFQLHYQAF (109 aa). Residues Asn-251, Asn-268, and Asn-290 are each glycosylated (N-linked (GlcNAc...) asparagine). In terms of domain architecture, Sushi 1 spans 331-390; that stretch reads LSCPFPRRPDAGEVTVMDLHSGGVAHFHCHLGYELQGAKTLTCINASKPHWSSQEPVCSA. 3 disulfide bridges follow: Cys-333/Cys-373, Cys-359/Cys-388, and Cys-392/Cys-419. N-linked (GlcNAc...) asparagine glycans are attached at residues Asn-375, Asn-398, Asn-414, Asn-454, Asn-516, and Asn-558. One can recognise a CUB 2 domain in the interval 392–502; the sequence is CGGAVHNATI…SAFNIRFEAF (111 aa). In terms of domain architecture, Sushi 2 spans 505-566; sequence GHCYEPYIQN…WNDTEPLCRA (62 aa). Intrachain disulfides connect Cys-507-Cys-549, Cys-534-Cys-564, and Cys-568-Cys-594. The 112-residue stretch at 568-679 folds into the CUB 3 domain; that stretch reads CGGELSAVAG…QGFIMNYIEV (112 aa). N-linked (GlcNAc...) asparagine glycans are attached at residues Asn-614 and Asn-682. Sushi domains are found at residues 683–742, 744–807, and 811–872; these read DSCS…FCEK, MYCT…HCVS, and LACD…ICKV. 6 disulfides stabilise this stretch: Cys-685/Cys-727, Cys-713/Cys-740, Cys-746/Cys-788, Cys-774/Cys-805, Cys-813/Cys-855, and Cys-841/Cys-870. The chain crosses the membrane as a helical span at residues 898–918; it reads LAIFIPVLLISLLLGGAYIYV. At 919–963 the chain is on the cytoplasmic side; the sequence is TRCRQYSSLRLPLMYSHPYSQITVETEFDNPIYETGETREYEVSI.

This sequence belongs to the SEZ6 family. As to expression, expressed exclusively in the brain, predominantly in neurons. Wide expression in the gray matter of the brain with high levels in the olfactory bulb, anterior olfactory nuclei, hippocampal formation and cerebellar cortex. Detected diffusely and weakly in the white matter, such as the corpus callosum and cerebellar medulla. In the cerebellar cortex, intensely expressed in Purkinje cells and granule cells. Detected also in interneurons in the molecular layer.

The protein localises to the cell membrane. Its subcellular location is the endoplasmic reticulum membrane. Functionally, candidate tumor suppressor gene. May contribute to specialized endoplasmic reticulum functions in neurons. In Mus musculus (Mouse), this protein is Seizure 6-like protein (Sez6l).